The chain runs to 126 residues: Aspartate 1-decarboxylase (126 aa).

Catalysis depends on Ser25, which acts as the Schiff-base intermediate with substrate; via pyruvic acid. Ser25 carries the post-translational modification Pyruvic acid (Ser). Thr57 lines the substrate pocket. Tyr58 functions as the Proton donor in the catalytic mechanism. Position 73-75 (73-75) interacts with substrate; it reads GAA.

This sequence belongs to the PanD family. Heterooctamer of four alpha and four beta subunits. Pyruvate is required as a cofactor. In terms of processing, is synthesized initially as an inactive proenzyme, which is activated by self-cleavage at a specific serine bond to produce a beta-subunit with a hydroxyl group at its C-terminus and an alpha-subunit with a pyruvoyl group at its N-terminus.

It localises to the cytoplasm. It catalyses the reaction L-aspartate + H(+) = beta-alanine + CO2. Its pathway is cofactor biosynthesis; (R)-pantothenate biosynthesis; beta-alanine from L-aspartate: step 1/1. Catalyzes the pyruvoyl-dependent decarboxylation of aspartate to produce beta-alanine. The sequence is that of Aspartate 1-decarboxylase from Tolumonas auensis (strain DSM 9187 / NBRC 110442 / TA 4).